Here is a 438-residue protein sequence, read N- to C-terminus: Transcription termination factor Rho (438 aa).

Residues 70–145 enclose the Rho RNA-BD domain; it reads YILFTGILEI…LKIEAINYLP (76 aa). ATP contacts are provided by residues 188 to 193, 200 to 205, and R231; these read GKGQRA and RTGKTE.

This sequence belongs to the Rho family. Homohexamer. The homohexamer assembles into an open ring structure.

Facilitates transcription termination by a mechanism that involves Rho binding to the nascent RNA, activation of Rho's RNA-dependent ATPase activity, and release of the mRNA from the DNA template. The chain is Transcription termination factor Rho from Helicobacter pylori (strain J99 / ATCC 700824) (Campylobacter pylori J99).